Consider the following 66-residue polypeptide: Large ribosomal subunit protein bL35 (66 aa).

Belongs to the bacterial ribosomal protein bL35 family.

The chain is Large ribosomal subunit protein bL35 from Deinococcus deserti (strain DSM 17065 / CIP 109153 / LMG 22923 / VCD115).